Here is a 316-residue protein sequence, read N- to C-terminus: MSKKDSLLTTPYLQFNRTQWAALRDSVPMTLSEAEIAQLKGINEDLSIEEVAEIYLPLSRLLNFYISSNLRRQAVLEQFLGTNGQKIPYIISIAGSVAVGKSTTARVLQALLSRWPEHRRVELITTDGFLHPNAVLKERGLMKKKGFPLSYDMHRLVKFVSDLKSGADHVTAPVYSHLIYDVIPDGDKNVQQPDILILEGLNVLQSGMDYPHDPHHVFVSDFVDFSIYVDAPEDLLEHWYINRFLKFRQGAFTDPDSYFHHYAQLPEDEAVGIASQLWHEINYRNLKENILPTRERASLIMTKSSGHAVDLVRLRK.

95-102 lines the ATP pocket; that stretch reads GSVAVGKS.

The protein belongs to the prokaryotic pantothenate kinase family.

It localises to the cytoplasm. The catalysed reaction is (R)-pantothenate + ATP = (R)-4'-phosphopantothenate + ADP + H(+). It participates in cofactor biosynthesis; coenzyme A biosynthesis; CoA from (R)-pantothenate: step 1/5. The sequence is that of Pantothenate kinase from Erwinia tasmaniensis (strain DSM 17950 / CFBP 7177 / CIP 109463 / NCPPB 4357 / Et1/99).